A 185-amino-acid polypeptide reads, in one-letter code: Ribosome-recycling factor (185 aa).

It belongs to the RRF family.

The protein localises to the cytoplasm. Responsible for the release of ribosomes from messenger RNA at the termination of protein biosynthesis. May increase the efficiency of translation by recycling ribosomes from one round of translation to another. This chain is Ribosome-recycling factor, found in Shewanella oneidensis (strain ATCC 700550 / JCM 31522 / CIP 106686 / LMG 19005 / NCIMB 14063 / MR-1).